The sequence spans 657 residues: Glycogen debranching enzyme (657 aa).

The active-site Nucleophile is the D336. Catalysis depends on E371, which acts as the Proton donor. Positions 460-479 are disordered; it reads ANGEENRDGTNNNYSNNHGK.

Belongs to the glycosyl hydrolase 13 family.

The enzyme catalyses Hydrolysis of (1-&gt;6)-alpha-D-glucosidic linkages to branches with degrees of polymerization of three or four glucose residues in limit dextrin.. Its pathway is glycan degradation; glycogen degradation. Its function is as follows. Removes maltotriose and maltotetraose chains that are attached by 1,6-alpha-linkage to the limit dextrin main chain, generating a debranched limit dextrin. In Escherichia coli O81 (strain ED1a), this protein is Glycogen debranching enzyme.